The following is a 154-amino-acid chain: Crossover junction endodeoxyribonuclease RuvC (154 aa).

Active-site residues include Asp-7, Glu-67, and Asp-139. Asp-7, Glu-67, and Asp-139 together coordinate Mg(2+).

The protein belongs to the RuvC family. Homodimer which binds Holliday junction (HJ) DNA. The HJ becomes 2-fold symmetrical on binding to RuvC with unstacked arms; it has a different conformation from HJ DNA in complex with RuvA. In the full resolvosome a probable DNA-RuvA(4)-RuvB(12)-RuvC(2) complex forms which resolves the HJ. Mg(2+) serves as cofactor.

It is found in the cytoplasm. The enzyme catalyses Endonucleolytic cleavage at a junction such as a reciprocal single-stranded crossover between two homologous DNA duplexes (Holliday junction).. In terms of biological role, the RuvA-RuvB-RuvC complex processes Holliday junction (HJ) DNA during genetic recombination and DNA repair. Endonuclease that resolves HJ intermediates. Cleaves cruciform DNA by making single-stranded nicks across the HJ at symmetrical positions within the homologous arms, yielding a 5'-phosphate and a 3'-hydroxyl group; requires a central core of homology in the junction. The consensus cleavage sequence is 5'-(A/T)TT(C/G)-3'. Cleavage occurs on the 3'-side of the TT dinucleotide at the point of strand exchange. HJ branch migration catalyzed by RuvA-RuvB allows RuvC to scan DNA until it finds its consensus sequence, where it cleaves and resolves the cruciform DNA. This Synechococcus sp. (strain CC9605) protein is Crossover junction endodeoxyribonuclease RuvC.